A 461-amino-acid polypeptide reads, in one-letter code: 3-deoxy-D-manno-octulosonic acid transferase (461 aa).

A helical; Signal-anchor transmembrane segment spans residues 2–22; it reads MLLYYTLSFILLPVYFIIIFI. The RPE1 insert domain maps to 47-88; sequence SALDFIQMSVNKEGFTDHKTTSYVDMHRNASLMYKLSLERSY. The active-site Proton acceptor is Glu-102. CMP contacts are provided by residues 306–307, 347–349, and 372–375; these read PR, FGE, and NILE.

Belongs to the glycosyltransferase group 1 family. Glycosyltransferase 30 subfamily.

It is found in the cell inner membrane. The catalysed reaction is lipid IVA (E. coli) + CMP-3-deoxy-beta-D-manno-octulosonate = alpha-Kdo-(2-&gt;6)-lipid IVA (E. coli) + CMP + H(+). The protein operates within bacterial outer membrane biogenesis; LPS core biosynthesis. Involved in lipopolysaccharide (LPS) biosynthesis. Catalyzes the transfer of 3-deoxy-D-manno-octulosonate (Kdo) residue(s) from CMP-Kdo to lipid IV(A), the tetraacyldisaccharide-1,4'-bisphosphate precursor of lipid A. In Rickettsia prowazekii (strain Madrid E), this protein is 3-deoxy-D-manno-octulosonic acid transferase (waaA).